A 227-amino-acid polypeptide reads, in one-letter code: MELVFIRHGFSEWNAKNLFTGWRDVNLTERGIEEAKSAGQKLKAAGYEFDIAFTSVLTRAIKTCNIVLEESNQLWIPQVKNWRLNERHYGALQGLDKKATAEQYGDEQVHIWRRSYDISPPDLDAADPNSAHNDRRYAHLPKDVIPNAENLKITLERVLPFWEDQIAPALLSGKRVLVTAHGNSLRALAKHIIGISDAEIMDFEIPTGQPLVLKLDDKLNFVEKFYL.

Substrate contacts are provided by residues 7–14 (RHGFSEWN), 20–21 (TG), Arg59, 86–89 (ERHY), Lys97, 113–114 (RR), and 182–183 (GN). The Tele-phosphohistidine intermediate role is filled by His8. The active-site Proton donor/acceptor is Glu86.

Belongs to the phosphoglycerate mutase family. BPG-dependent PGAM subfamily. As to quaternary structure, homodimer.

The catalysed reaction is (2R)-2-phosphoglycerate = (2R)-3-phosphoglycerate. It functions in the pathway carbohydrate degradation; glycolysis; pyruvate from D-glyceraldehyde 3-phosphate: step 3/5. Catalyzes the interconversion of 2-phosphoglycerate and 3-phosphoglycerate. In Actinobacillus pleuropneumoniae serotype 5b (strain L20), this protein is 2,3-bisphosphoglycerate-dependent phosphoglycerate mutase.